Reading from the N-terminus, the 196-residue chain is Large ribosomal subunit protein eL15 (196 aa).

Positions 159–196 (RAYRGRTSAGQRGRGQQKRGKGTEHTRPSIRANDKRGK) are disordered. Basic and acidic residues predominate over residues 179–196 (KGTEHTRPSIRANDKRGK).

This sequence belongs to the eukaryotic ribosomal protein eL15 family.

This is Large ribosomal subunit protein eL15 from Natronomonas pharaonis (strain ATCC 35678 / DSM 2160 / CIP 103997 / JCM 8858 / NBRC 14720 / NCIMB 2260 / Gabara) (Halobacterium pharaonis).